The sequence spans 71 residues: Protein CYSTEINE-RICH TRANSMEMBRANE MODULE 4 (71 aa).

Positions 1–12 (MSQYSQNQSSGA) are enriched in polar residues. Residues 1-31 (MSQYSQNQSSGAYPTPPVSTGPYMTPPPLGY) form a disordered region. Residues 14–30 (PTPPVSTGPYMTPPPLG) show a composition bias toward pro residues. Residues 48–64 (SKGDGFLKGCLAAMCCC) traverse the membrane as a helical segment.

It belongs to the CYSTM1 family. In terms of assembly, heterodimers. Interacts with CYSTM6, CYSTM7, CYSTM12 and WIH1/CYSTM13. In terms of tissue distribution, mostly expressed in roots, stems, rosette leaves and siliques and, to a lower extent, in flowers and cauline leaves.

It is found in the cell membrane. The protein resides in the cytoplasm. Functionally, involved in resistance to abiotic stress. The polypeptide is Protein CYSTEINE-RICH TRANSMEMBRANE MODULE 4 (Arabidopsis thaliana (Mouse-ear cress)).